The primary structure comprises 137 residues: Ribosome-binding factor A (137 aa).

It belongs to the RbfA family. As to quaternary structure, monomer. Binds 30S ribosomal subunits, but not 50S ribosomal subunits or 70S ribosomes.

It is found in the cytoplasm. Functionally, one of several proteins that assist in the late maturation steps of the functional core of the 30S ribosomal subunit. Associates with free 30S ribosomal subunits (but not with 30S subunits that are part of 70S ribosomes or polysomes). Required for efficient processing of 16S rRNA. May interact with the 5'-terminal helix region of 16S rRNA. The polypeptide is Ribosome-binding factor A (Cereibacter sphaeroides (strain ATCC 17029 / ATH 2.4.9) (Rhodobacter sphaeroides)).